Here is a 123-residue protein sequence, read N- to C-terminus: MLNKTSRKEQRERRRIRVRKKITGTRECPRLNVFRSARHIYAQLVDDERGVTLCAASTLLPELKERLGDGGGKIGVARAVGEMIAEKAKSLGIERVVFDRAGYLYHGRVKALAEGARAKGLEF.

It belongs to the universal ribosomal protein uL18 family. As to quaternary structure, part of the 50S ribosomal subunit; part of the 5S rRNA/L5/L18/L25 subcomplex. Contacts the 5S and 23S rRNAs.

Functionally, this is one of the proteins that bind and probably mediate the attachment of the 5S RNA into the large ribosomal subunit, where it forms part of the central protuberance. This is Large ribosomal subunit protein uL18 from Desulforudis audaxviator (strain MP104C).